We begin with the raw amino-acid sequence, 448 residues long: MRFDPSEIGEVLEMLLFRELDIRAVTLSVNTLPAIRPTVGDTLAALEETLEPLLKRLRPAVERVASRLGVKIVTVRLAVSPISIMLEPIGKAEAAVEIAKHLDGLAEKHGVDMVGGFSAFVHAGVSRGDAALMEALPEALNSTRRLAGFLNVASTATGVNMDAVRAAAEAVLKMEPHAAARFAATANMPEDVPFMPGAYHGLGLPDAVVNIAVSGPGVIEAVVRNMPNADVRTLHDAIKRAAFKITRLGELVGREVAKELGVPFGSVDLSVAPSPKVGDSVAAILEAVGLPRVGAPGTLFALALFVDAVKKGGAMATSTIGGLSGAFIPVSEDVVMAEAAREGALTFDTLKSTLAVCNTGIDMAGIPGDAPPDAVAALIADVMAVAVALDKALGVRLVPIPGAKPGDVYDLGGLYGRVVVMDLGKYRDIPLARRKGTAPPAVERLKKG.

It belongs to the UPF0210 family.

In Pyrobaculum islandicum (strain DSM 4184 / JCM 9189 / GEO3), this protein is UPF0210 protein Pisl_0759.